The chain runs to 262 residues: Acyl-[acyl-carrier-protein]--UDP-N-acetylglucosamine O-acyltransferase (262 aa).

This sequence belongs to the transferase hexapeptide repeat family. LpxA subfamily. In terms of assembly, homotrimer.

The protein localises to the cytoplasm. The catalysed reaction is a (3R)-hydroxyacyl-[ACP] + UDP-N-acetyl-alpha-D-glucosamine = a UDP-3-O-[(3R)-3-hydroxyacyl]-N-acetyl-alpha-D-glucosamine + holo-[ACP]. Its pathway is glycolipid biosynthesis; lipid IV(A) biosynthesis; lipid IV(A) from (3R)-3-hydroxytetradecanoyl-[acyl-carrier-protein] and UDP-N-acetyl-alpha-D-glucosamine: step 1/6. Functionally, involved in the biosynthesis of lipid A, a phosphorylated glycolipid that anchors the lipopolysaccharide to the outer membrane of the cell. This Janthinobacterium sp. (strain Marseille) (Minibacterium massiliensis) protein is Acyl-[acyl-carrier-protein]--UDP-N-acetylglucosamine O-acyltransferase.